The following is a 359-amino-acid chain: 4-galactosyl-N-acetylglucosaminide 3-alpha-L-fucosyltransferase FUT6 (359 aa).

At 1-14 (MDPLGPAKPQWSWR) the chain is on the cytoplasmic side. A helical; Signal-anchor for type II membrane protein membrane pass occupies residues 15–34 (CCLTTLLFQLLMAVCFFSYL). Topologically, residues 35–359 (RVSQDDPTVY…QTRGIAAWFT (325 aa)) are lumenal. Asparagine 46, asparagine 91, asparagine 153, and asparagine 184 each carry an N-linked (GlcNAc...) asparagine glycan. The interval 73–112 (KPIALPRCSEMVPGTADCNITADRKVYPQADAVIVHHREV) is determines site-specific fucosylation.

The protein belongs to the glycosyltransferase 10 family. As to quaternary structure, homodimer and monomer. Monomer (secreted form). Post-translationally, N-glycosylated. In terms of processing, proteolytic cleavage releases a secreted glycoform of 43 kDa. In terms of tissue distribution, kidney, liver, colon, small intestine, bladder, uterus and salivary gland.

It localises to the golgi apparatus. The protein resides in the golgi stack membrane. It is found in the secreted. It carries out the reaction a beta-D-galactosyl-(1-&gt;4)-N-acetyl-beta-D-glucosaminyl derivative + GDP-beta-L-fucose = a beta-D-galactosyl-(1-&gt;4)-[alpha-L-fucosyl-(1-&gt;3)]-N-acetyl-beta-D-glucosaminyl derivative + GDP + H(+). The catalysed reaction is an N-acetyl-alpha-neuraminyl-(2-&gt;3)-beta-D-galactosyl-(1-&gt;4)-N-acetyl-beta-D-glucosaminyl derivative + GDP-beta-L-fucose = an alpha-Neu5Ac-(2-&gt;3)-beta-D-Gal-(1-&gt;4)-[alpha-L-Fuc-(1-&gt;3)]-beta-D-GlcNAc derivative + GDP + H(+). The enzyme catalyses an alpha-Neu5Ac-(2-&gt;3)-beta-D-Gal-(1-&gt;4)-beta-D-GlcNAc-(1-&gt;3)-beta-D-Gal-(1-&gt;4)-[alpha-L-Fuc-(1-&gt;3)]-beta-D-GlcNAc derivative + GDP-beta-L-fucose = an alpha-Neu5Ac-(2-&gt;3)-beta-D-Gal-(1-&gt;4)-[alpha-L-Fuc-(1-&gt;3)]-beta-D-GlcNAc-(1-&gt;3)-beta-D-Gal-(1-&gt;4)-[alpha-L-Fuc-(1-&gt;3)]-beta-D-GlcNAc derivative + GDP + H(+). It catalyses the reaction a neolactoside nLc6Cer + GDP-beta-L-fucose = beta-D-Gal-(1-&gt;4)-[alpha-L-Fuc-(1-&gt;3)]-beta-D-GlcNAc-(1-&gt;3)-beta-D-Gal-(1-&gt;4)-beta-D-GlcNAc-(1-&gt;3)-beta-D-Gal-(1-&gt;4)-beta-D-Glc-(1&lt;-&gt;1')-Cer + GDP + H(+). It carries out the reaction a neolactoside nLc6Cer + GDP-beta-L-fucose = beta-D-galactosyl-(1-&gt;4)-N-acetyl-beta-D-glucosaminyl-(1-&gt;3)-beta-D-galactosyl-(1-&gt;4)-[alpha-L-fucosyl-(1-&gt;3)]-N-acetyl-beta-D-glucosaminyl-(1-&gt;3)-beta-D-galactosyl-(1-&gt;4)-beta-D-glucosyl-(1&lt;-&gt;1')-ceramide + GDP + H(+). The catalysed reaction is a neolactoside VI(3)-alpha-NeuNAc-nLc6Cer + GDP-beta-L-fucose = a neolactoside VI(3)-alpha-NeuAc,V(3)-alphaFuc-nLc6Cer + GDP + H(+). The enzyme catalyses beta-D-galactosyl-(1-&gt;4)-N-acetyl-D-glucosamine + GDP-beta-L-fucose = beta-D-galactosyl-(1-&gt;4)-[alpha-L-fucosyl-(1-&gt;3)]-N-acetyl-D-glucosamine + GDP + H(+). It catalyses the reaction N-acetyl-alpha-neuraminosyl-(2-&gt;3)-beta-D-galactosyl-(1-&gt;4)-N-acetyl-beta-D-glucosamine + GDP-beta-L-fucose = N-acetyl-alpha-neuraminosyl-(2-&gt;3)-beta-D-galactosyl-(1-&gt;4)-[alpha-L-fucosyl-(1-&gt;3)]-N-acetyl-beta-D-glucosamine + GDP + H(+). It carries out the reaction lactose + GDP-beta-L-fucose = beta-D-galactosyl-(1-&gt;4)-[alpha-L-fucosyl-(1-&gt;3)]-D-glucose + GDP + H(+). The catalysed reaction is alpha-L-Fuc-(1-&gt;2)-beta-D-Gal-(1-&gt;4)-D-Glc + GDP-beta-L-fucose = alpha-L-Fuc-(1-&gt;2)-beta-D-Gal-(1-&gt;4)-[alpha-L-Fuc-(1-&gt;3)]-D-Glc + GDP + H(+). The enzyme catalyses a beta-D-galactosyl-(1-&gt;4)-N-acetyl-beta-D-6-sulfooxy-glucosaminyl derivative + GDP-beta-L-fucose = a beta-D-galactosyl-(1-&gt;4)-[alpha-L-fucosyl-(1-&gt;3)]-N-acetyl-beta-D-6-sulfooxy-glucosaminyl derivative + GDP + H(+). The protein operates within protein modification; protein glycosylation. Catalyzes the transfer of L-fucose, from a guanosine diphosphate-beta-L-fucose, to the N-acetyl glucosamine (GlcNAc) of a distal alpha2,3 sialylated lactosamine unit of a glycoprotein- or a glycolipid-linked sialopolylactosamines chain or of a distal or internal lactosamine unit of a neutral glycoprotein- or a glycolipid-linked polylactosamines chain through an alpha-1,3 glycosidic linkage and participates in surface expression of the sialyl Lewis X (sLe(x)), Lewis X (Le(x)) and non sialylated VIM2 determinants. Moreover transfers fucose to H-type 2 (Fucalpha1-2Galbeta1-4GlcNAc) chain acceptor substrates and participates in difucosylated sialyl Lewis x determinants. Also fucosylates a polylactosamine substrate having a 6 sulfate modification at the GlcNAc moiety and gives rise to sialyl and non-sialyl 6-sulfo lewis X. Does not have activity towards type 1 ((Galbeta1-3GlcNAc)) and H-type 1 chain (Fucalpha1-2Galbeta1-3GlcNAc) acceptors substrates. Functionally, does not have alpha(1,3)-fucosyltransferase activity. This is 4-galactosyl-N-acetylglucosaminide 3-alpha-L-fucosyltransferase FUT6 from Homo sapiens (Human).